The sequence spans 70 residues: Cold shock-like protein CspG (70 aa).

The CSD domain occupies 7 to 67; sequence GLVKWFNADK…GQRGPAAANV (61 aa).

It is found in the cytoplasm. This is Cold shock-like protein CspG (cspG) from Escherichia coli O157:H7.